The following is a 1318-amino-acid chain: Meiotically up-regulated gene 79 protein (1318 aa).

Disordered regions lie at residues 177 to 198 (PVNS…SGSY), 208 to 227 (EEEL…IVVT), and 360 to 387 (PQAL…PPKG). Over residues 364-384 (AAAESPTTKAPTTKAPTSEAP) the composition is skewed to low complexity. The PH domain occupies 1049-1158 (MISYKKMVLS…WIHSLNFNAA (110 aa)).

It localises to the nucleus. Its function is as follows. Appears to have a role in sporulation. The polypeptide is Meiotically up-regulated gene 79 protein (mug79) (Schizosaccharomyces pombe (strain 972 / ATCC 24843) (Fission yeast)).